The chain runs to 359 residues: 3-dehydroquinate synthase (359 aa).

NAD(+)-binding positions include 71–76 (DGEAYK), 105–109 (GVIGD), 129–130 (TT), Lys142, Lys151, and 169–172 (TLGT). Zn(2+) contacts are provided by Glu184, His247, and His264.

It belongs to the sugar phosphate cyclases superfamily. Dehydroquinate synthase family. Co(2+) is required as a cofactor. It depends on Zn(2+) as a cofactor. NAD(+) serves as cofactor.

It is found in the cytoplasm. It carries out the reaction 7-phospho-2-dehydro-3-deoxy-D-arabino-heptonate = 3-dehydroquinate + phosphate. It participates in metabolic intermediate biosynthesis; chorismate biosynthesis; chorismate from D-erythrose 4-phosphate and phosphoenolpyruvate: step 2/7. Catalyzes the conversion of 3-deoxy-D-arabino-heptulosonate 7-phosphate (DAHP) to dehydroquinate (DHQ). In Thiobacillus denitrificans (strain ATCC 25259 / T1), this protein is 3-dehydroquinate synthase.